Reading from the N-terminus, the 443-residue chain is Xaa-Pro dipeptidase (443 aa).

5 residues coordinate Mn(2+): D248, D259, H339, E384, and E423.

This sequence belongs to the peptidase M24B family. Bacterial-type prolidase subfamily. The cofactor is Mn(2+).

It carries out the reaction Xaa-L-Pro dipeptide + H2O = an L-alpha-amino acid + L-proline. In terms of biological role, splits dipeptides with a prolyl residue in the C-terminal position. The polypeptide is Xaa-Pro dipeptidase (Colwellia psychrerythraea (strain 34H / ATCC BAA-681) (Vibrio psychroerythus)).